Here is a 4538-residue protein sequence, read N- to C-terminus: Polyketide synthase PksL (4538 aa).

The tract at residues 1–123 is N-terminal hotdog fold 1; that stretch reads MRWRSNVKKI…ADMHADSPAI (123 aa). The PKS/mFAS DH 1 domain maps to 1 to 285; the sequence is MRWRSNVKKI…SKLVREAELI (285 aa). Catalysis depends on His-26, which acts as the Proton acceptor; for dehydratase activity 1. The tract at residues 138–285 is C-terminal hotdog fold 1; the sequence is QNVVQLDDVY…SKLVREAELI (148 aa). Catalysis depends on Asp-199, which acts as the Proton donor; for dehydratase activity 1. Residues 289–314 form a disordered region; it reads HQDAQETQMTRADTAERDKPADMVSS. Residues 320 to 394 enclose the Carrier 1 domain; it reads SEAEQFVSQL…ELSAFLAEEY (75 aa). Ser-354 is subject to O-(pantetheine 4'-phosphoryl)serine. Residues 433–871 enclose the Ketosynthase family 3 (KS3) 1 domain; sequence AGDIAIIGLA…GSNAHIILEE (439 aa). Catalysis depends on for beta-ketoacyl synthase 1 activity residues Cys-609, His-744, and His-784. Residues 1048–1226 form a dehydratase region; that stretch reads HILHPLLHQN…DSLYAGENGV (179 aa). The segment at 1051-1175 is N-terminal hotdog fold 2; the sequence is HPLLHQNVSD…GSAVLCEAGE (125 aa). In terms of domain architecture, PKS/mFAS DH 2 spans 1051 to 1340; it reads HPLLHQNVSD…ARVLETDQEG (290 aa). The active-site Proton acceptor; for dehydratase activity 2 is the His-1080. The segment at 1189-1340 is C-terminal hotdog fold 2; that stretch reads NGRTLSPFDC…ARVLETDQEG (152 aa). The Proton donor; for dehydratase activity 2 role is filled by Asp-1251. Residues 1520–1713 are beta-ketoacyl reductase 1; the sequence is KGVYLITGGA…WKDGGMQIDA (194 aa). The 74-residue stretch at 1800–1873 folds into the Carrier 2 domain; that stretch reads EKAENYFKQV…SLTRYFIDSR (74 aa). Ser-1834 bears the O-(pantetheine 4'-phosphoryl)serine mark. The Ketosynthase family 3 (KS3) 2 domain maps to 1926–2365; sequence TEEIAIIGIS…GVNAHILIEE (440 aa). Residues Cys-2103, His-2238, and His-2278 each act as for beta-ketoacyl synthase 2 activity in the active site. Residues 2546–2568 form a disordered region; it reads TEEPFAPVQPVIPKPSVDREASG. 2 Carrier domains span residues 2597–2674 and 2738–2815; these read ITAE…AHEL and VAIE…KSEL. O-(pantetheine 4'-phosphoryl)serine occurs at positions 2634 and 2775. The interval 2828–2854 is disordered; the sequence is SFEAAQQKPAASSHPKPAERPLQPVQH. Residues 2873–3294 form the Ketosynthase family 3 (KS3) 3 domain; it reads EDAIAIVGMS…GTNAHIVIEE (422 aa). Residues Cys-3040, His-3175, and His-3215 each act as for beta-ketoacyl synthase 3 activity in the active site. The beta-ketoacyl reductase 2 stretch occupies residues 3686-3887; that stretch reads DKVLLITGGT…PNWKETGLGE (202 aa). The Carrier 5 domain occupies 3960–4037; sequence NLFPETVDWL…SFAHWLISKY (78 aa). Ser-3997 carries the post-translational modification O-(pantetheine 4'-phosphoryl)serine. The region spanning 4082–4485 is the Ketosynthase family 3 (KS3) 4 domain; sequence AEDIAIIGLS…GTNAHLIIEG (404 aa). Residue Cys-4237 is the For beta-ketoacyl synthase 4 activity of the active site.

It depends on pantetheine 4'-phosphate as a cofactor.

The protein localises to the cytoplasm. The protein operates within antibiotic biosynthesis; bacillaene biosynthesis. Involved in some intermediate steps for the synthesis of the antibiotic polyketide bacillaene which is involved in secondary metabolism. This is Polyketide synthase PksL (pksL) from Bacillus subtilis (strain 168).